The primary structure comprises 531 residues: CTP synthase (531 aa).

The tract at residues 1–264 (MPKFVVVTGG…GDFLVERLRL (264 aa)) is amidoligase domain. S13 serves as a coordination point for CTP. Residue S13 coordinates UTP. 14–19 (GLGKGV) is an ATP binding site. L-glutamine is bound at residue Y54. Residue D71 coordinates ATP. D71 and E139 together coordinate Mg(2+). Residues 146 to 148 (DYE), 185 to 190 (KTKPLQ), and K221 each bind CTP. UTP is bound by residues 185–190 (KTKPLQ) and K221. Positions 293–531 (CGKYVELPDA…LSAAVEQSRR (239 aa)) constitute a Glutamine amidotransferase type-1 domain. G351 is a binding site for L-glutamine. The Nucleophile; for glutamine hydrolysis role is filled by C378. L-glutamine contacts are provided by residues 379–382 (FGMQ), E402, and R459. Active-site residues include H504 and E506.

Belongs to the CTP synthase family. As to quaternary structure, homotetramer.

The catalysed reaction is UTP + L-glutamine + ATP + H2O = CTP + L-glutamate + ADP + phosphate + 2 H(+). It carries out the reaction L-glutamine + H2O = L-glutamate + NH4(+). The enzyme catalyses UTP + NH4(+) + ATP = CTP + ADP + phosphate + 2 H(+). It participates in pyrimidine metabolism; CTP biosynthesis via de novo pathway; CTP from UDP: step 2/2. Its activity is regulated as follows. Allosterically activated by GTP, when glutamine is the substrate; GTP has no effect on the reaction when ammonia is the substrate. The allosteric effector GTP functions by stabilizing the protein conformation that binds the tetrahedral intermediate(s) formed during glutamine hydrolysis. Inhibited by the product CTP, via allosteric rather than competitive inhibition. Its function is as follows. Catalyzes the ATP-dependent amination of UTP to CTP with either L-glutamine or ammonia as the source of nitrogen. Regulates intracellular CTP levels through interactions with the four ribonucleotide triphosphates. The sequence is that of CTP synthase from Pyrobaculum calidifontis (strain DSM 21063 / JCM 11548 / VA1).